Consider the following 224-residue polypeptide: Retinoschisin (224 aa).

Residues 1–23 (MSRKIEGFLLLLLFGYEATLGLS) form the signal peptide. Positions 63-219 (CPYHKPLGFE…IAIRMELLEC (157 aa)) constitute an F5/8 type C domain. Disulfide bonds link Cys-63–Cys-219 and Cys-110–Cys-142.

In terms of assembly, homooctamer of 4 homodimers; disulfide-linked. The homooctamer has a flat, cogwheel structure with a diameter of about 14 nm. Two stacked octamers can assemble to form a hexadecamer. Restricted to the retina (at protein level). Detected in the inner segment of the photoreceptors, the inner nuclear layer, the inner plexiform layer and the ganglion cell layer (at protein level). At the macula, expressed in both the outer and inner nuclear layers and in the inner plexiform layer (at protein level). Detected in retina. Detected only within the photoreceptor cell layer, most prominently within the inner segments of the photoreceptors. Undetectable in the inner plexiform layers and the inner nuclear layer.

Its subcellular location is the secreted. The protein localises to the cell membrane. In terms of biological role, binds negatively charged membrane lipids, such as phosphatidylserine and phosphoinositides. May play a role in cell-cell adhesion processes in the retina, via homomeric interaction between octamers present on the surface of two neighboring cells. Required for normal structure and function of the retina. The protein is Retinoschisin (RS1) of Homo sapiens (Human).